A 356-amino-acid polypeptide reads, in one-letter code: Protein-L-isoaspartate O-methyltransferase domain-containing protein 1 (356 aa).

Gly2 carries the N-myristoyl glycine lipid modification. Ser64 is a catalytic residue. 3 adoMet binding motif regions span residues 85–94, 160–164, and 181–191; these read LNLGSGTGYL, YDRIY, and LKVGGILVMPI. The BC-box stretch occupies residues 240 to 250; sequence VRNLQDLARIY. The interval 299 to 331 is disordered; sequence PLDSEEDEKMEEDKEEEEKEPGEALKPEEPPQN. Residues 301–318 show a composition bias toward acidic residues; the sequence is DSEEDEKMEEDKEEEEKE. Residues 319 to 331 are compositionally biased toward basic and acidic residues; the sequence is PGEALKPEEPPQN. The CUL-box stretch occupies residues 340–343; sequence LPLP.

The protein belongs to the methyltransferase superfamily. L-isoaspartyl/D-aspartyl protein methyltransferase family. Component of the probable ECS(PCMTD1) E3 ubiquitin-protein ligase complex, at least composed of CUL5, ELOB, ELOC, RBX2 and PCMTD1. Interacts (via the BC-box) with ELOB and ELOC; the interaction is direct and stabilizes PCMTD1.

It is found in the cytoplasm. It localises to the membrane. Its function is as follows. Substrate recognition component of an ECS (Elongin BC-CUL5-SOCS-box protein) E3 ubiquitin ligase complex which mediates the ubiquitination and subsequent proteasomal degradation of target proteins. Specifically binds to the methyltransferase cofactor S-adenosylmethionine (AdoMet) via the N-terminal AdoMet binding motif, but does not display methyltransferase activity. May provide an alternate maintenance pathway for modified proteins by acting as a damage-specific E3 ubiquitin ligase adaptor protein. The chain is Protein-L-isoaspartate O-methyltransferase domain-containing protein 1 (PCMTD1) from Bos taurus (Bovine).